Here is a 462-residue protein sequence, read N- to C-terminus: uncharacterized protein (462 aa).

Asp-12, His-14, Asp-48, Asn-81, His-179, and His-202 together coordinate a divalent metal cation. Positions 258–291 (ESAETKAFLNEKEREAEEKLSDAVAELAQDAEVK) form a coiled coil.

The protein belongs to the metallophosphoesterase superfamily. The cofactor is a divalent metal cation.

This is an uncharacterized protein from Bacillus subtilis (strain 168).